A 2718-amino-acid chain; its full sequence is E3 SUMO-protein ligase RanBP2 (2718 aa).

Positions 1–100 (MFTTRKEVDA…DPRQSEVVID (100 aa)) are sufficient for interaction with Hsp83. A sufficient for interaction with piwi region spans residues 1–200 (MFTTRKEVDA…EKMKIDQAFN (200 aa)). 2 TPR repeats span residues 26 to 58 (DIKGLAVARLYMKVQEYPKAIEYLNGYLRVRDD) and 59 to 94 (AVGHNMIATCYSRLNPPDVTEALQHYQRSIQIDPRQ). 2 disordered regions span residues 796–816 (QQDRNSRGIDNSFGSPDVHNN) and 937–959 (EHQQQQQHQQQQSHNQGAIHPVV). Residues 803–816 (GIDNSFGSPDVHNN) are compositionally biased toward polar residues. Repeat unit 1 spans residues 808-809 (FG). The interval 808–2581 (FGSPDVHNNS…GEENETKLFG (1774 aa)) is 27 X 2 AA repeats of F-G. Residues 938–948 (HQQQQQHQQQQ) are compositionally biased toward low complexity. Tandem repeats lie at residues 1028-1029 (FG), 1035-1036 (FG), and 1104-1105 (FG). The disordered stretch occupies residues 1181-1208 (QPVEKEPPANVVITSSDPLPKPTTASVQ). A compositionally biased stretch (polar residues) spans 1192-1208 (VITSSDPLPKPTTASVQ). The stretch at 1252-1253 (FG) is repeat 5. 2 disordered regions span residues 1263 to 1314 (FKTQ…KPII) and 1483 to 1502 (NKPQEQTKTQPNPDPPATAA). Positions 1284 to 1299 (NQSGATDPNKTLPQDT) are enriched in polar residues. The 137-residue stretch at 1309 to 1445 (DFKPIIPLPD…FTKASEAAKS (137 aa)) folds into the RanBD1 1 domain. Positions 1483–1493 (NKPQEQTKTQP) are enriched in polar residues. 4 repeat units span residues 1506–1507 (FG), 1539–1540 (FG), 1547–1548 (FG), and 1552–1553 (FG). Positions 1605–1742 (QFVPVIALPD…VQKAQQSIGN (138 aa)) constitute a RanBD1 2 domain. The disordered stretch occupies residues 1738 to 1761 (QSIGNEPKKEEVPSAAGEKEKPIK). Residues 1743–1760 (EPKKEEVPSAAGEKEKPI) are compositionally biased toward basic and acidic residues. Copy 10 of the repeat occupies 1763–1764 (FG). The RanBP2-type 1 zinc-finger motif lies at 1770–1799 (KAGSWNCQACYTNNGQDQLYCLACQEPKDA). Tandem repeats lie at residues 1826-1827 (FG), 1842-1843 (FG), 1874-1875 (FG), and 1883-1884 (FG). Residues 1890-1919 (AVGSWSCSACYVNNPGESLYCSACDAPKND) form a RanBP2-type 2 zinc finger. Tandem repeats lie at residues 1942 to 1943 (FG) and 1944 to 1945 (FG). 3 disordered regions span residues 1981 to 2021 (FTFS…TYFS), 2154 to 2204 (EDSP…THEV), and 2239 to 2273 (SLSRNNSSASEASKTPSSAFIFGSTDKSEPGKDAG). Positions 2002–2016 (EDEDNDSQEVEEEEN) are enriched in acidic residues. The 133-residue stretch at 2019–2151 (YFSPVIPLPD…IKNALNETAK (133 aa)) folds into the RanBD1 3 domain. Residues 2161–2175 (SVSQSTEANKPSQKN) show a composition bias toward polar residues. Positions 2239 to 2257 (SLSRNNSSASEASKTPSSA) are enriched in low complexity. Repeat copies occupy residues 2260-2261 (FG), 2313-2314 (FG), 2332-2333 (FG), 2352-2353 (FG), 2360-2361 (FG), 2366-2367 (FG), 2393-2394 (FG), 2399-2400 (FG), 2415-2416 (FG), 2421-2422 (FG), and 2580-2581 (FG). A disordered region spans residues 2320-2346 (AEQQKKDSSESVFGGNKADSQSPATQE). The RanBD1 4 domain maps to 2556–2699 (HYDAIVELPD…VNSCIKRAKA (144 aa)).

The protein belongs to the RanBP2 E3 ligase family. As to quaternary structure, part of the nuclear pore complex. Forms a complex with Nxt1, sbr/Nxf1 and RanGAP. Interacts (via TPR repeats) with Hsp83; the interaction is required for the nuclear import of the sesquiterpenoid juvenile hormone receptor Met. Interacts (via N-terminus) with piwi. Expressed in both oocytes and nurse cells (at protein level).

It is found in the nucleus. The protein localises to the nuclear pore complex. E3 SUMO-protein ligase. Component of the nuclear pore complex (NPC), a complex required for trafficking across the nuclear envelope. Required for nuclear import of nuclear localization signal (NLS)-containing proteins in an importin alpha/importin beta-dependent manner, but also for the nuclear import of specific proteins such as phosphorylated Mad or the sesquiterpenoid juvenile hormone receptor Met as part of the juvenile hormone signal transduction pathway. Plays a role in nuclear mRNA export by recruiting the mRNA transport complex composed of Nxt1 and sbr/Nxf1 to the NPC. Essential during germline development for transposon silencing and piRNA biogenesis probably by regulating piwi localization to the nucleus. During oogenesis, required to form granules that modulate the biogenesis of annulate lamellae containing nuclear pore complex components. The sequence is that of E3 SUMO-protein ligase RanBP2 from Drosophila melanogaster (Fruit fly).